The primary structure comprises 174 residues: Ribosome maturation factor RimM (174 aa).

The PRC barrel domain maps to S97–L171.

The protein belongs to the RimM family. As to quaternary structure, binds ribosomal protein uS19.

It is found in the cytoplasm. In terms of biological role, an accessory protein needed during the final step in the assembly of 30S ribosomal subunit, possibly for assembly of the head region. Essential for efficient processing of 16S rRNA. May be needed both before and after RbfA during the maturation of 16S rRNA. It has affinity for free ribosomal 30S subunits but not for 70S ribosomes. The polypeptide is Ribosome maturation factor RimM (Geotalea daltonii (strain DSM 22248 / JCM 15807 / FRC-32) (Geobacter daltonii)).